The chain runs to 270 residues: NAD kinase (270 aa).

Catalysis depends on Asp-49, which acts as the Proton acceptor. Residues 49-50 (DG), Arg-54, 126-127 (NE), Arg-152, Asp-154, 165-170 (TAYNKS), Ala-189, and Gln-227 each bind NAD(+).

The protein belongs to the NAD kinase family. A divalent metal cation serves as cofactor.

The protein resides in the cytoplasm. It carries out the reaction NAD(+) + ATP = ADP + NADP(+) + H(+). In terms of biological role, involved in the regulation of the intracellular balance of NAD and NADP, and is a key enzyme in the biosynthesis of NADP. Catalyzes specifically the phosphorylation on 2'-hydroxyl of the adenosine moiety of NAD to yield NADP. The chain is NAD kinase from Lactococcus lactis subsp. lactis (strain IL1403) (Streptococcus lactis).